Consider the following 161-residue polypeptide: Ribonuclease H (161 aa).

In terms of domain architecture, RNase H type-1 spans 11–152; sequence GPRPVVIHTD…ADQLARDGLT (142 aa). Positions 20, 58, 80, and 144 each coordinate Mg(2+). Residues 137–161 are disordered; it reads HDENERADQLARDGLTENRMKSRIG.

This sequence belongs to the RNase H family. In terms of assembly, monomer. Mg(2+) serves as cofactor.

It localises to the cytoplasm. It carries out the reaction Endonucleolytic cleavage to 5'-phosphomonoester.. In terms of biological role, endonuclease that specifically degrades the RNA of RNA-DNA hybrids. This is Ribonuclease H from Rhodopseudomonas palustris (strain HaA2).